The sequence spans 372 residues: Protein phosphatase Mn(2+)-dependent 1K (372 aa).

The transit peptide at 1 to 29 directs the protein to the mitochondrion; the sequence is MLSTAFITLVRSGRNQVKKRVLLSSILLQ. The interval 46–61 is critical for association with the BCKDH complex; that stretch reads RCSRFDPDGSGQPATW. One can recognise a PPM-type phosphatase domain in the interval 94-346; sequence NVGCASLIGK…DNSTAVVVPF (253 aa). Residues Asp-127 and Gly-128 each coordinate Mn(2+). Ser-248 carries the phosphoserine modification. Mn(2+) contacts are provided by Asp-298 and Asp-337.

This sequence belongs to the PP2C family. In terms of assembly, interacts with E1 and E2 components of the branched-chain alpha-ketoacid dehydrogenase (BCKDH) complex. Interacts with both BCKDHA and BCKDHB chains of the E1 subunit. Interacts with the 24-meric DBT/E2 core of the BCKD complex with a 1:1 stoichiometry; the N-terminal region (residues 49-61) of PPM1K and C-terminal linker of the lipoyl domain of DBT/E2 (residues 145-160) are critical for this interaction whereas the lipoyl prosthetic group is dispensable. Competes with BCKDK for binding to DBT/E2; this interaction is modulated by branched-chain alpha-keto acids (BCKAs). At steady state, BCKDH holoenzyme preferentially binds BCKDK and BCKDHA/E1 is phosphorylated. In response to high levels of BCKAs, BCKDK is replaced by PPM1K leading to BCKDHA/E1 dephosphorylation. Mn(2+) serves as cofactor.

It localises to the mitochondrion matrix. The catalysed reaction is O-phospho-L-seryl-[3-methyl-2-oxobutanoate dehydrogenase] + H2O = L-seryl-[3-methyl-2-oxobutanoate dehydrogenase] + phosphate. It carries out the reaction O-phospho-L-seryl-[protein] + H2O = L-seryl-[protein] + phosphate. It functions in the pathway protein modification. In terms of biological role, serine/threonine-protein phosphatase component of macronutrients metabolism. Together with BCKDK serves as a metabolic regulatory node that coordinates branched-chain amino acids (BCAAs) and protein synthesis with glucose and lipid metabolism via two distinct phosphoprotein targets: BCKDHA/E1a subunit of the branched-chain alpha-ketoacid dehydrogenase (BCKDH) complex and ACLY, a lipogenic enzyme of Krebs cycle. At high levels of branched-chain ketoacids (BCKAs), dephosphorylates and activates mitochondrial BCKDH complex, a multisubunit complex consisting of three components, heterotetrameric E1 composed of BCKDHA and BCKDHB chains, 24-meric E2 core composed of DBT and homodimeric E3 composed of DLD, each involved in different steps of BCAA catabolism. Tightly associates with the E2 subunit of BCKDH complex and dephosphorylates Ser-333 of BCKDHA chain of the E1 subunit likely through on-off binding to individual E2 subunits of the 24-meric E2 core to increase the efficiency of the dephosphorylation reaction. Appears to dephosphorylate and inactivate cytosolic ACLY in response to changes of cellular carbohydrate abundance. Overnutrition and in particular high-fructose diet, activates MLXIPL/ChREBP leading to increased BCKDK to PPM1K ratio, phosphorylation of ACLY on Ser-454 and activation of its enzymatic activity that ultimately results in the generation of acetyl-CoA and malonyl-CoA immediate substrates of de novo lipogenesis. Recognizes phosphosites having SxS or RxxS motifs and strictly depends on Mn(2+) ions for the phosphatase activity. Regulates Ca(2+)-induced opening of mitochondrial transition pore and apoptotic cell death. The protein is Protein phosphatase Mn(2+)-dependent 1K (Ppm1k) of Rattus norvegicus (Rat).